The sequence spans 289 residues: tRNA-cytidine(32) 2-sulfurtransferase (289 aa).

A PP-loop motif motif is present at residues 49 to 54 (SGGKDS). 3 residues coordinate [4Fe-4S] cluster: C124, C127, and C215.

The protein belongs to the TtcA family. In terms of assembly, homodimer. It depends on Mg(2+) as a cofactor. Requires [4Fe-4S] cluster as cofactor.

The protein localises to the cytoplasm. The enzyme catalyses cytidine(32) in tRNA + S-sulfanyl-L-cysteinyl-[cysteine desulfurase] + AH2 + ATP = 2-thiocytidine(32) in tRNA + L-cysteinyl-[cysteine desulfurase] + A + AMP + diphosphate + H(+). The protein operates within tRNA modification. Catalyzes the ATP-dependent 2-thiolation of cytidine in position 32 of tRNA, to form 2-thiocytidine (s(2)C32). The sulfur atoms are provided by the cysteine/cysteine desulfurase (IscS) system. The chain is tRNA-cytidine(32) 2-sulfurtransferase from Methylococcus capsulatus (strain ATCC 33009 / NCIMB 11132 / Bath).